We begin with the raw amino-acid sequence, 575 residues long: E3 ubiquitin-protein ligase kcmf-1 (575 aa).

The ZZ-type zinc finger occupies 9 to 73 (HEGVSCDGCA…PMQLILSSVD (65 aa)). Positions 14, 17, 29, 32, 38, 41, 59, and 63 each coordinate Zn(2+). Disordered stretches follow at residues 277–306 (PIYP…DDND) and 530–575 (EADE…INID). Acidic residues-rich tracts occupy residues 297–306 (SADESEDDND) and 530–563 (EADE…ENDS).

Belongs to the KCMF1 family.

It localises to the cytoplasm. The protein localises to the late endosome. The protein resides in the lysosome. It carries out the reaction S-ubiquitinyl-[E2 ubiquitin-conjugating enzyme]-L-cysteine + [acceptor protein]-L-lysine = [E2 ubiquitin-conjugating enzyme]-L-cysteine + N(6)-ubiquitinyl-[acceptor protein]-L-lysine.. It participates in protein modification; protein ubiquitination. E3 ubiquitin-protein ligase which accepts ubiquitin from an E2 ubiquitin-conjugating enzyme and then transfers it to targeted substrates, promoting their degradation by the proteasome. This chain is E3 ubiquitin-protein ligase kcmf-1, found in Caenorhabditis elegans.